The sequence spans 447 residues: Gustatory receptor family protein 3 (447 aa).

Over 1–69 (MTITASNTLE…HTHSSARNTM (69 aa)) the chain is Extracellular. A helical membrane pass occupies residues 70–90 (FKWPLTIYNYLTLAILTAATI). Over 91–116 (RRISQIKQKSATNEEKDAAFHVLNPT) the chain is Cytoplasmic. The chain crosses the membrane as a helical span at residues 117-137 (FVLTLCHALLMFSGLAAGFLL). The Extracellular segment spans residues 138 to 171 (LKLQKQREKMYHVLDQGLGRNRNEEHDSHHFKLN). Residues 172 to 192 (KLFISISFSFAAALSFVQIAT) form a helical membrane-spanning segment. Over 193–211 (KMRYLDLPDTPDLINRKIY) the chain is Cytoplasmic. The chain crosses the membrane as a helical span at residues 212–232 (FVILEGYVIFIASSCISLVAI). The Extracellular portion of the chain corresponds to 233-292 (LFFQLCRILQFSIGQLIEEMVPKEKEECPLPEQSLQQIHDVQIHYQEISNAKLYIEQNFS). Residues 293–313 (FSLFYTYGCCIPLTCLLGYIA) traverse the membrane as a helical segment. The Cytoplasmic segment spans residues 314-328 (FRNGIQADMAETFSV). The chain crosses the membrane as a helical span at residues 329-349 (AIWLTNTMLALMLFSIPAFMI). At 350–405 (AEEGDKLLTASFKMYHETLCEERDLLVLSQMSFLSFQMHATKLTLTAGNFFMMNRK) the chain is on the extracellular side. A helical membrane pass occupies residues 406-426 (IMISLFSAIFTYFLILVQFDA). At 427 to 447 (EKERAGECNNQSRVLIVQPPV) the chain is on the cytoplasmic side.

This sequence belongs to the insect chemoreceptor superfamily. Gustatory receptor (GR) family. In terms of tissue distribution, expressed in I2 pharyngeal neurons.

The protein localises to the membrane. Its function is as follows. Chemoreceptor involved in light-induced avoidance behavior. Probably acts as a molecular sensor in I2 pharyngeal neurons, required for the inhibition of feeding in response to light and hydrogen peroxide. Involved in circadian rhythms, probably by acting as a light sensor. In contrast to lite-1, does not act as a photoreceptor. The protein is Gustatory receptor family protein 3 of Caenorhabditis elegans.